We begin with the raw amino-acid sequence, 61 residues long: Truncated 3-beta hydroxy-5-ene steroid dehydrogenase homolog (61 aa).

Belongs to the 3-beta-HSD family.

The protein is Truncated 3-beta hydroxy-5-ene steroid dehydrogenase homolog of Variola virus (isolate Human/India/Ind3/1967) (VARV).